We begin with the raw amino-acid sequence, 425 residues long: AFP homolog 2 (425 aa).

Disordered stretches follow at residues 1–207 and 288–327; these read MDDD…SGTE and PFAG…DNSN. The necessary and sufficient for the interaction with TOPLESS stretch occupies residues 7-17; it reads LELSLGLSCGG. The span at 20 to 34 shows a compositional bias: low complexity; the sequence is GKAKGNNNNNAGSSS. A compositionally biased stretch (basic and acidic residues) spans 37–54; it reads YRAEGGDRSAKVIDDFKN. The span at 66–81 shows a compositional bias: low complexity; sequence PSSGSQRSDSGQQPPQ. Residues 124–140 show a composition bias toward basic and acidic residues; sequence NDDKKKEKDSSHVDMHE. 3 stretches are compositionally biased toward polar residues: residues 146-158, 185-197, and 288-299; these read SHVS…GSTA, TDTN…TGQR, and PFAGRVPSNSAT. The necessary and sufficient for the interaction with the JAZ proteins stretch occupies residues 322 to 425; it reads TGDNSNLNTA…MGMTAASAHT (104 aa).

The protein belongs to the Ninja family. As to quaternary structure, component of a complex at least composed of TOPLESS, TPR2, TPR3, TIFY4B/PPD2, MYC3/ATR2 and TIFY3B/JAZ12. Interacts (via C-terminus) with TIFY10A/JAZ1; TIFY10B/JAZ2; TIFY6B/JAZ3; TIFY6A/JAZ4; TIFY11A/JAZ5; TIFY11B/JAZ6; TIFY7/JAZ9; TIFY9/JAZ10; TIFY3A/JAZ11; TIFY3B/JAZ12; TIFY4A/PPD1; TIFY4B/PPD2 and TIFY8 (via TIFY domain). Interacts with TOPLESS. Interacts with PAT1H1.

The protein resides in the nucleus. Functionally, acts as a transcriptional repressor. Negative regulator of jasmonate responses. Connects the JAZ proteins and the non-JAZ protein TIFY8 with the TOPLESS corepressors. The polypeptide is AFP homolog 2 (Arabidopsis thaliana (Mouse-ear cress)).